The primary structure comprises 903 residues: Glutamate receptor ionotropic, NMDA 1 (903 aa).

Positions 1–20 (MGTMRLFLLAVLFLFSFARA) are cleaved as a signal peptide. At 21 to 557 (GCDPKIVNIG…TLDSFMQPFQ (537 aa)) the chain is on the extracellular side. N-linked (GlcNAc...) asparagine glycans are attached at residues Asn61, Asn203, Asn276, Asn300, Asn350, Asn368, Asn440, Asn469, and Asn489. Cys79 and Cys308 are joined by a disulfide. 2 disulfides stabilise this stretch: Cys420–Cys452 and Cys436–Cys453. Positions 514, 516, and 521 each coordinate glycine. The helical transmembrane segment at 558-578 (STLWLLVGLSVHVVAVMLYLL) threads the bilayer. Residues 579–600 (DRFSPFGRFKVNSEEEEEDALT) are Cytoplasmic-facing. The interval 601-620 (LSSAMWFSWGVLLNSGIGEG) is pore-forming. Residues 601 to 622 (LSSAMWFSWGVLLNSGIGEGAP) constitute an intramembrane region (discontinuously helical). Residues 623 to 628 (RSFSAR) are Cytoplasmic-facing. Residues 629-645 (ILGMVWAGFAMIIVASY) traverse the membrane as a helical segment. Over 646-810 (TANLAAFLVL…NAPATLTFEN (165 aa)) the chain is Extracellular. Positions 686 and 730 each coordinate glycine. Residues Cys742 and Cys796 are joined by a disulfide bond. N-linked (GlcNAc...) asparagine glycosylation is present at Asn769. A helical membrane pass occupies residues 811-831 (MAGVFMLVAGGIVAGIFLIFI). At 832–903 (EIAYKRHKDA…SSKDTVNVVV (72 aa)) the chain is on the cytoplasmic side.

This sequence belongs to the glutamate-gated ion channel (TC 1.A.10.1) family. NR1/GRIN1 subfamily. Heterotetramer; the NMDAR subunits are modular and harbor tiered domains that function in concert to regulate opening and closing of the cation-selective ion channel pore. Forms heterotetrameric channels composed of two GluN1/zeta subunits (GRIN1), and two identical GluN2/epsilon subunits (GRIN2A, GRIN2B, GRIN2C or GRIN2D) or GluN3 subunits (GRIN3A or GRIN3B) (in vitro). Does not form functional channels by itself. Can also form heterotetrameric channels that contain at least two GluN1 subunits and at least two different GluN2 subunits (or a combination of one GluN2 and one GluN3 subunits) (in vitro). In vivo, the subunit composition may vary in function of the expression levels of the different subunits.

Its subcellular location is the cell membrane. It is found in the postsynaptic cell membrane. It localises to the postsynaptic density membrane. The protein resides in the synaptic cell membrane. It catalyses the reaction Ca(2+)(in) = Ca(2+)(out). The enzyme catalyses Na(+)(in) = Na(+)(out). The catalysed reaction is K(+)(in) = K(+)(out). NMDA glutamate receptor activity is modulated by zinc ions. The NMDA glutamate receptor activity of the heterotetramer with grin2b is stimulated by micromolar levels of Zn(2+). The NMDA glutamate receptor activity of the heterotetramer with grin2a is inhibited by nanomolar levels of Zn(2+). Its function is as follows. Component of N-methyl-D-aspartate (NMDA) receptors (NMDARs) that function as heterotetrameric, ligand-gated cation channels with high calcium permeability and voltage-dependent block by Mg(2+). NMDARs participate in synaptic plasticity. Channel activation requires binding of the neurotransmitter L-glutamate to the GluN2 subunit, glycine binding to the GluN1 subunit, plus membrane depolarization to eliminate channel inhibition by Mg(2+). NMDARs mediate simultaneously the potasium efflux and the influx of calcium and sodium. Each GluN2 or GluN3 subunit confers differential attributes to channel properties, including activation, deactivation and desensitization kinetics, pH sensitivity, Ca2(+) permeability, and binding to allosteric modulators. This chain is Glutamate receptor ionotropic, NMDA 1, found in Xenopus laevis (African clawed frog).